A 216-amino-acid chain; its full sequence is Cell envelope integrity protein Cei (216 aa).

A helical membrane pass occupies residues 25–45 (PAIVVVAFLVVVTCVMWTLAL).

The protein localises to the cell membrane. Functionally, contributes to cell envelope integrity and virulence. This Mycobacterium tuberculosis (strain ATCC 25618 / H37Rv) protein is Cell envelope integrity protein Cei.